The primary structure comprises 393 residues: 2-nitroimidazole transporter (393 aa).

The Cytoplasmic portion of the chain corresponds to 1–12 (MTCSTSLSGKNR). A helical transmembrane segment spans residues 13–33 (IVLIAGILMIATTLRVTFTGA). At 34-52 (APLLDTIRSAYSLTTAQTG) the chain is on the periplasmic side. The helical transmembrane segment at 53–73 (LLTTLPLLAFALISPLAAPVA) threads the bilayer. Over 74 to 80 (RRFGMER) the chain is Cytoplasmic. The next 2 helical transmembrane spans lie at 81 to 101 (SLFAALLLICAGIAIRSLPSP) and 102 to 122 (YLLFGGTAVIGGGIALGNVLL). Topologically, residues 123-140 (PGLIKRDFPHSVARLTGA) are cytoplasmic. A helical transmembrane segment spans residues 141–161 (YSLTMGAAAALGSAMVVPLAL). Over 162–163 (NG) the chain is Periplasmic. A helical membrane pass occupies residues 164 to 184 (FGWQGALLMLMCFPLLALFLW). The Cytoplasmic segment spans residues 185–218 (LPQWRSQQHANLSTSRALHTRGIWRSPLAWQVTL). Residues 219 to 239 (FLGINSLVYYVIIGWLPAILI) traverse the membrane as a helical segment. The Periplasmic segment spans residues 240–249 (SHGYSEAQAG). Residues 250–270 (SLHGLLQLATAAPGLLIPLFL) form a helical membrane-spanning segment. The Cytoplasmic portion of the chain corresponds to 271–278 (HHVKDQRG). The chain crosses the membrane as a helical span at residues 279–299 (IAAFVALMCAVGAVGLCFMPA). Topologically, residues 300-304 (HAITW) are periplasmic. Residues 305–325 (TLLFGFGSGATMILGLTFIGL) form a helical membrane-spanning segment. Residues 326–334 (RASSAHQAA) lie on the Cytoplasmic side of the membrane. Residues 335–355 (ALSGMAQSVGYLLAACGPPLM) form a helical membrane-spanning segment. Over 356 to 366 (GKIHDANGNWS) the chain is Periplasmic. A helical membrane pass occupies residues 367-387 (VPLMGVAILSLLMAIFGLCAG). Topologically, residues 388-393 (RDKEIR) are cytoplasmic.

Belongs to the major facilitator superfamily. Cyanate porter (TC 2.A.1.17) family.

It is found in the cell inner membrane. Its function is as follows. Involved in efflux of 2-nitroimidazole. This chain is 2-nitroimidazole transporter, found in Escherichia coli (strain K12).